A 145-amino-acid chain; its full sequence is Hemoglobin subunit beta-1 (145 aa).

Positions 1-145 (TFTNDESQHI…VEAALATGYH (145 aa)) constitute a Globin domain. The heme b site is built by histidine 62 and histidine 91.

The protein belongs to the globin family. As to quaternary structure, major hemoglobin is a tetramer of two alpha-1 chains and two beta-1 chains. As to expression, red blood cells.

Its function is as follows. Involved in oxygen transport from the lung to the various peripheral tissues. In Triturus cristatus (Great crested newt), this protein is Hemoglobin subunit beta-1 (HBB1).